Here is a 339-residue protein sequence, read N- to C-terminus: Protein RecA (339 aa).

74–81 (GPESSGKT) serves as a coordination point for ATP.

Belongs to the RecA family.

The protein localises to the cytoplasm. Can catalyze the hydrolysis of ATP in the presence of single-stranded DNA, the ATP-dependent uptake of single-stranded DNA by duplex DNA, and the ATP-dependent hybridization of homologous single-stranded DNAs. It interacts with LexA causing its activation and leading to its autocatalytic cleavage. The polypeptide is Protein RecA (Phytoplasma mali (strain AT)).